Reading from the N-terminus, the 193-residue chain is Superoxide dismutase [Fe] (193 aa).

His-27, His-74, Asp-157, and His-161 together coordinate Fe cation.

This sequence belongs to the iron/manganese superoxide dismutase family. As to quaternary structure, homodimer. Requires Fe cation as cofactor.

The catalysed reaction is 2 superoxide + 2 H(+) = H2O2 + O2. In terms of biological role, destroys superoxide anion radicals which are normally produced within the cells and which are toxic to biological systems. The polypeptide is Superoxide dismutase [Fe] (sodB) (Salmonella typhimurium (strain LT2 / SGSC1412 / ATCC 700720)).